We begin with the raw amino-acid sequence, 353 residues long: MSTRRDLPQSPYLAAVAGRKPSRVPVWFMRQAGRSLPEYRALRRQHSMLAACFEPEVACEVTMQPIRRYHVDAAILFSDIVVPLRAAGVDLDIVADVGPVIAAPVRTVADVDAIKPIDSQSIAPVLDAVELLVAELGDTPLIGFAGAPFTLASYLVEGGPSRHHARTKAMMLAEPATWHALMTKLTDLTIEFLLGQIRAGVDAIQVFDSWAGMLSLADYRQYALPHSARVFATLAEHGVPMTHFGVGTAELLGAMSEAVKPGTAKVVGVDWRTALADAAARVQPGTALQGNLDPVVLLAGWPAVERAARAVVDDGRRAVDAGAAGYVFNLGHGVLPQTDPGVLTDLVSLVHSL.

Residues 30 to 34 (RQAGR), aspartate 79, tyrosine 154, serine 209, and histidine 332 contribute to the substrate site.

It belongs to the uroporphyrinogen decarboxylase family. As to quaternary structure, homodimer.

The protein localises to the cytoplasm. The enzyme catalyses uroporphyrinogen III + 4 H(+) = coproporphyrinogen III + 4 CO2. Its pathway is porphyrin-containing compound metabolism; protoporphyrin-IX biosynthesis; coproporphyrinogen-III from 5-aminolevulinate: step 4/4. Functionally, catalyzes the decarboxylation of four acetate groups of uroporphyrinogen-III to yield coproporphyrinogen-III. The chain is Uroporphyrinogen decarboxylase from Mycobacterium ulcerans (strain Agy99).